We begin with the raw amino-acid sequence, 196 residues long: Proteasome subunit beta 1 (196 aa).

The propeptide at 1-6 (MEELPA) is removed in mature form; by autocatalysis. Thr-7 acts as the Nucleophile in catalysis.

It belongs to the peptidase T1B family. As to quaternary structure, the 20S proteasome core is composed of 14 alpha and 14 beta subunits that assemble into four stacked heptameric rings, resulting in a barrel-shaped structure. The two inner rings, each composed of seven catalytic beta subunits, are sandwiched by two outer rings, each composed of seven alpha subunits. The catalytic chamber with the active sites is on the inside of the barrel. Has a gated structure, the ends of the cylinder being occluded by the N-termini of the alpha-subunits. Is capped at one or both ends by the proteasome regulatory ATPase, PAN.

It localises to the cytoplasm. It catalyses the reaction Cleavage of peptide bonds with very broad specificity.. Its activity is regulated as follows. The formation of the proteasomal ATPase PAN-20S proteasome complex, via the docking of the C-termini of PAN into the intersubunit pockets in the alpha-rings, triggers opening of the gate for substrate entry. Interconversion between the open-gate and close-gate conformations leads to a dynamic regulation of the 20S proteasome proteolysis activity. In terms of biological role, component of the proteasome core, a large protease complex with broad specificity involved in protein degradation. This is Proteasome subunit beta 1 from Saccharolobus solfataricus (strain ATCC 35092 / DSM 1617 / JCM 11322 / P2) (Sulfolobus solfataricus).